The sequence spans 766 residues: Exocyst complex component 6 (766 aa).

Residues 28-90 (NTKQIGDQLE…SLDTSLRQIS (63 aa)) adopt a coiled-coil conformation.

The protein belongs to the SEC15 family. The exocyst complex is composed of Sec3/Exoc1, Sec5/Exoc2, Sec6/Exoc3, Sec8/Exoc4, Sec10/Exoc5, Sec15/Exoc6, Exo70/Exoc7 and Exo84/Exoc8. Interacts with RAB3, RAB8, RAB11 and RAB27. Detected in developing rhabdomeres in photoreceptor cells.

It is found in the cell projection. Its subcellular location is the rhabdomere. Its function is as follows. Component of the exocyst complex involved in the docking of exocytic vesicles with fusion sites on the plasma membrane. The chain is Exocyst complex component 6 from Drosophila melanogaster (Fruit fly).